We begin with the raw amino-acid sequence, 437 residues long: EFHDRLSYPPHSVSPTDISTSLPPMSSFHRGSTSSSPYVAASHTPPINGSDSILGARGNAAGSSQTGDALGKALASIYSPDHTSSSFPSNPSTPVGSPSPLTGTSQWPRAGGQAPSSPSYENSLHSLKNRVEQQLHEHLQDAMSFLKDVCEQSRMEDRLDRLDDAIHVLRNHAVGPSTSLPTSHSDIHSLLGPSHNAPIGNLNSNYGGSSLVTNSRSASMVGTHREDSVNLNGNHSVLSSTVAASNTDLNHKTPENYRGGLQNQSGNVVPTEIKTENKEKDENLHEPPSSDDMKSDDESSQKDIKVSSRGRTSSTNEDEDLNPEQKIEREKERRMANNARERLRVRDINEAFKELGRMCQLHLKSEKPQTKLLILHQAVAVILSLEQQVRERNLNPKAACLKRREEEKVSAASAEPPTTLPGTHPGLSETTNPMGHL.

Disordered regions lie at residues Glu-1–Asp-68, Pro-80–Ser-123, and Ala-244–Met-335. The span at Val-13–Pro-37 shows a compositional bias: polar residues. Phosphothreonine is present on Thr-44. Ser-64 carries the post-translational modification Phosphoserine. A compositionally biased stretch (low complexity) spans Thr-83–Pro-94. Polar residues-rich tracts occupy residues Val-95 to Trp-107 and Ala-114 to Ser-123. Composition is skewed to basic and acidic residues over residues Ile-273 to His-285 and Asp-291 to Val-306. A Glycyl lysine isopeptide (Lys-Gly) (interchain with G-Cter in SUMO2) cross-link involves residue Lys-274. A Phosphoserine modification is found at Ser-295. A Glycyl lysine isopeptide (Lys-Gly) (interchain with G-Cter in SUMO2) cross-link involves residue Lys-305. The residue at position 312 (Thr-312) is a Phosphothreonine. Residues Ser-313 and Ser-314 each carry the phosphoserine modification. Over residues Pro-323–Met-335 the composition is skewed to basic and acidic residues. A bHLH domain is found at Glu-332–Leu-385. Residues Lys-364 and Lys-408 each participate in a glycyl lysine isopeptide (Lys-Gly) (interchain with G-Cter in SUMO2) cross-link. The segment at Gln-387–Ser-410 is class A specific domain. Positions Glu-405 to Leu-437 are disordered. The segment covering Pro-416–Leu-427 has biased composition (low complexity). Positions Ser-428–Leu-437 are enriched in polar residues.

As to quaternary structure, efficient DNA binding requires dimerization with another bHLH protein. Forms homo- or heterooligomers with myogenin, E12 and ITF2 proteins. Interacts with NEUROD2. Interacts with PTF1A. Interacts with RUNX1T1. Interacts with BHLHA9.

It is found in the nucleus. In terms of biological role, transcriptional regulator. Involved in the initiation of neuronal differentiation. Activates transcription by binding to the E box (5'-CANNTG-3'). Participates in the control of inducible RP4 gene expression in salivary cells. Binds to the RIPE3 element of the insulin II promoter. May be involved in the functional network that regulates the development of the GnRH axis. The protein is Transcription factor 12 (TCF12) of Mesocricetus auratus (Golden hamster).